Here is a 79-residue protein sequence, read N- to C-terminus: Acyl carrier protein (79 aa).

The 76-residue stretch at Q3–K78 folds into the Carrier domain. O-(pantetheine 4'-phosphoryl)serine is present on S38.

Belongs to the acyl carrier protein (ACP) family. 4'-phosphopantetheine is transferred from CoA to a specific serine of apo-ACP by AcpS. This modification is essential for activity because fatty acids are bound in thioester linkage to the sulfhydryl of the prosthetic group.

The protein resides in the cytoplasm. It functions in the pathway lipid metabolism; fatty acid biosynthesis. Functionally, carrier of the growing fatty acid chain in fatty acid biosynthesis. This Prochlorococcus marinus (strain MIT 9312) protein is Acyl carrier protein.